Here is a 213-residue protein sequence, read N- to C-terminus: Ribosomal RNA small subunit methyltransferase G (213 aa).

S-adenosyl-L-methionine-binding positions include glycine 75, phenylalanine 80, 128–129 (IE), and arginine 144.

This sequence belongs to the methyltransferase superfamily. RNA methyltransferase RsmG family.

The protein localises to the cytoplasm. It carries out the reaction guanosine(527) in 16S rRNA + S-adenosyl-L-methionine = N(7)-methylguanosine(527) in 16S rRNA + S-adenosyl-L-homocysteine. Specifically methylates the N7 position of guanine in position 527 of 16S rRNA. The sequence is that of Ribosomal RNA small subunit methyltransferase G from Brucella suis biovar 1 (strain 1330).